The primary structure comprises 394 residues: Elongation factor Tu (394 aa).

The tr-type G domain occupies 10–204 (KPHINIGTIG…AVDDNIPTPE (195 aa)). The segment at 19-26 (GHVDHGKT) is G1. 19-26 (GHVDHGKT) lines the GTP pocket. Residue T26 coordinates Mg(2+). The tract at residues 60-64 (GITIN) is G2. A G3 region spans residues 81-84 (DCPG). Residues 81–85 (DCPGH) and 136–139 (NKID) contribute to the GTP site. Positions 136–139 (NKID) are G4. The G5 stretch occupies residues 174 to 176 (SAL).

This sequence belongs to the TRAFAC class translation factor GTPase superfamily. Classic translation factor GTPase family. EF-Tu/EF-1A subfamily. As to quaternary structure, monomer.

The protein resides in the cytoplasm. It carries out the reaction GTP + H2O = GDP + phosphate + H(+). GTP hydrolase that promotes the GTP-dependent binding of aminoacyl-tRNA to the A-site of ribosomes during protein biosynthesis. This is Elongation factor Tu from Chlamydia abortus (strain DSM 27085 / S26/3) (Chlamydophila abortus).